Here is a 98-residue protein sequence, read N- to C-terminus: ESAT-6-like protein EsxJ (98 aa).

The protein belongs to the WXG100 family. CFP-10 subfamily.

It is found in the secreted. In Mycobacterium bovis (strain ATCC BAA-935 / AF2122/97), this protein is ESAT-6-like protein EsxJ.